Consider the following 20-residue polypeptide: Zinc metalloproteinase-disintegrin-like uracoina-1 (20 aa).

The protein belongs to the venom metalloproteinase (M12B) family. P-III subfamily. As to quaternary structure, monomer. Zn(2+) is required as a cofactor. As to expression, expressed by the venom gland.

It is found in the secreted. With respect to regulation, inhibited by ethylenediaminetetraacetic acid (EDTA) and 1,10-phenanthroline. Not inhibited by tosyl-L-lysine chloromethyl ketone (TCLK) and phenylmethanesulfonylfluoride (PMSF). In terms of biological role, snake venom zinc metalloprotease that possesses hemorrhagic activity (minimum hemorrhagic dose, MHD=4.7 ug) when injected intradermally into mice. Degrades the alpha-chain of fibrinogen (FGA). In Crotalus vegrandis (Uracoan rattlesnake), this protein is Zinc metalloproteinase-disintegrin-like uracoina-1.